Here is a 477-residue protein sequence, read N- to C-terminus: Cysteine--tRNA ligase (477 aa).

Cys28 provides a ligand contact to Zn(2+). Residues Pro30–His40 carry the 'HIGH' region motif. Zn(2+) is bound by residues Cys208, His233, and Glu237. Positions Lys265 to Ser269 match the 'KMSKS' region motif. Residue Lys268 coordinates ATP.

This sequence belongs to the class-I aminoacyl-tRNA synthetase family. Requires Zn(2+) as cofactor.

It is found in the cytoplasm. The enzyme catalyses tRNA(Cys) + L-cysteine + ATP = L-cysteinyl-tRNA(Cys) + AMP + diphosphate. In Pyrococcus furiosus (strain ATCC 43587 / DSM 3638 / JCM 8422 / Vc1), this protein is Cysteine--tRNA ligase.